Consider the following 599-residue polypeptide: uncharacterized protein (599 aa).

The span at 1 to 13 (MSSSSSHNSFSGS) shows a compositional bias: low complexity. 2 disordered regions span residues 1 to 27 (MSSS…IDGL) and 41 to 86 (YPSN…DDTN). The segment covering 14–27 (KTNAAEGQNSIDGL) has biased composition (polar residues). The span at 44–70 (NEEKEVKETDIVPDENKVNELDVHKQS) shows a compositional bias: basic and acidic residues. 14 helical membrane-spanning segments follow: residues 97–117 (IVVP…TIVT), 135–155 (WIGS…GVFC), 162–182 (IVLY…GASQ), 192–212 (AIQG…ISDI), 223–243 (GILA…GGAI), 251–271 (WIFF…VVFL), 290–310 (FIGL…ISLG), 321–341 (ILCY…YDTF), 359–379 (AALL…AYYV), 396–416 (VHTI…GMVL), 423–443 (LPLI…MICV), 452–472 (VMGL…PPLI), 489–509 (TLMF…EVIF), and 552–572 (VIWI…FFIK).

This sequence belongs to the major facilitator superfamily. TCR/Tet family.

It is found in the membrane. This is an uncharacterized protein from Schizosaccharomyces pombe (strain 972 / ATCC 24843) (Fission yeast).